A 157-amino-acid polypeptide reads, in one-letter code: MSRRHAAEKKVIPGDPVYGSVVLERFINKVMLHGKKSIARKIVYGALERFAKRLGLENPLEGFEEALENAKPILEVRSRRVGGATYQVPVEVAPDRRSCLAMQWIIKHARSKPGKCMEIGLANELIDCFNKQGATIKKREDTHRMAEANKAFAHYKW.

It belongs to the universal ribosomal protein uS7 family. As to quaternary structure, part of the 30S ribosomal subunit. Contacts proteins S9 and S11.

Functionally, one of the primary rRNA binding proteins, it binds directly to 16S rRNA where it nucleates assembly of the head domain of the 30S subunit. Is located at the subunit interface close to the decoding center, probably blocks exit of the E-site tRNA. The sequence is that of Small ribosomal subunit protein uS7 from Chlamydia muridarum (strain MoPn / Nigg).